Reading from the N-terminus, the 200-residue chain is Imidazoleglycerol-phosphate dehydratase (200 aa).

This sequence belongs to the imidazoleglycerol-phosphate dehydratase family.

It is found in the cytoplasm. The catalysed reaction is D-erythro-1-(imidazol-4-yl)glycerol 3-phosphate = 3-(imidazol-4-yl)-2-oxopropyl phosphate + H2O. It participates in amino-acid biosynthesis; L-histidine biosynthesis; L-histidine from 5-phospho-alpha-D-ribose 1-diphosphate: step 6/9. This Renibacterium salmoninarum (strain ATCC 33209 / DSM 20767 / JCM 11484 / NBRC 15589 / NCIMB 2235) protein is Imidazoleglycerol-phosphate dehydratase.